The following is a 146-amino-acid chain: Phospholipase A2 PS22 (146 aa).

Residues 1 to 19 form the signal peptide; the sequence is MYPAHLLVLLAVCVSLLGA. Positions 20–27 are excised as a propeptide; the sequence is ASVPPQPL. 7 disulfide bridges follow: Cys38–Cys98, Cys54–Cys145, Cys56–Cys72, Cys71–Cys126, Cys78–Cys119, Cys87–Cys112, and Cys105–Cys117. Ca(2+)-binding residues include Tyr55, Gly57, and Gly59. His75 is an active-site residue. Asp76 contributes to the Ca(2+) binding site. The active site involves Asp120.

This sequence belongs to the phospholipase A2 family. Group I subfamily. D49 sub-subfamily. The cofactor is Ca(2+). Expressed by the venom gland.

It localises to the secreted. It catalyses the reaction a 1,2-diacyl-sn-glycero-3-phosphocholine + H2O = a 1-acyl-sn-glycero-3-phosphocholine + a fatty acid + H(+). Functionally, snake venom phospholipase A2 (PLA2) that inhibits collagen-induced platelet aggregation. PLA2 catalyzes the calcium-dependent hydrolysis of the 2-acyl groups in 3-sn-phosphoglycerides. This Drysdalia coronoides (White-lipped snake) protein is Phospholipase A2 PS22.